A 262-amino-acid chain; its full sequence is Triosephosphate isomerase (262 aa).

13 to 15 is a binding site for substrate; that stretch reads NWK. The active-site Electrophile is His103. Catalysis depends on Glu175, which acts as the Proton acceptor. Substrate is bound by residues Gly181, Ser221, and 242–243; that span reads GG.

This sequence belongs to the triosephosphate isomerase family. Homodimer.

The protein localises to the cytoplasm. The catalysed reaction is D-glyceraldehyde 3-phosphate = dihydroxyacetone phosphate. The protein operates within carbohydrate biosynthesis; gluconeogenesis. It participates in carbohydrate degradation; glycolysis; D-glyceraldehyde 3-phosphate from glycerone phosphate: step 1/1. In terms of biological role, involved in the gluconeogenesis. Catalyzes stereospecifically the conversion of dihydroxyacetone phosphate (DHAP) to D-glyceraldehyde-3-phosphate (G3P). The protein is Triosephosphate isomerase of Corynebacterium efficiens (strain DSM 44549 / YS-314 / AJ 12310 / JCM 11189 / NBRC 100395).